The primary structure comprises 351 residues: O-methyltransferase apf6 (351 aa).

S-adenosyl-L-methionine is bound by residues 231–232, 279–280, and Arg295; these read GG and NF. His299 acts as the Proton acceptor in catalysis.

It belongs to the class I-like SAM-binding methyltransferase superfamily. Cation-independent O-methyltransferase family.

It participates in secondary metabolite biosynthesis. Its function is as follows. O-methyltransferase; part of the gene cluster that mediates the biosynthesis of the cyclic tetrapeptide apicidin F (APF). The non-ribosomal peptide synthetase apf1 incorporates four different amino acids to produce apicidin F: L-phenylalanine, D-pipecolic acid (D-pip), N-methoxy-L-tryptophan and L-2-aminooctanedioic acid. L-Phenylalanine is the only proteinogenic amino acid directly used by apf1. The 3 other apf1 substrates are non-proteinogenic and have to be modified by other enzymes of the cluster. Lysine is converted to delta-1-pyrroline-5-carboxylate (P5C) which is reduced to L-pipecolic acid (L-pip) by apf3. L-pip is epimerized to D-pip, probably by apf1 activity, prior to incorporation. L-Tryptophan is N-oxidyzed by one of the cytochrome P450 monooxygenases (apf7 or apf8), and further methylated at the hydroxy group by the O-methyltransferase apf6 to yield N-methoxy-L-tryptophan. The synthesis of the fourth apf1 substrate is more complex. The fatty acid synthase apf5 is involved in the synthesis of the octanoic acid backbone of L-2-aminooctanedioic acid by fixing one acetyl-CoA unit and three malonyl-CoA units. Then one of the cytochrome P450 monooxygenases (apf7 or apf8) may oxidize this backbone to 2-oxooctanoic acid. The aminotransferase apf4 is predicted to catalyze the exchange of the keto group with an amino group. The next step would be the oxidation of 2-aminooctanoic acid by one of the cytochrome P450 monooxygenases (apf7 or apf8). The last step is the oxidation of 2-amino-8-hydroxyoctanoic acid to 2-aminooctanedioic acid is catalyzed by the FAD-dependent monooxygenase apf9. The polypeptide is O-methyltransferase apf6 (Gibberella fujikuroi (strain CBS 195.34 / IMI 58289 / NRRL A-6831) (Bakanae and foot rot disease fungus)).